We begin with the raw amino-acid sequence, 425 residues long: MVGYIGDIHISESDAEVAECLSAEYKRQNTSLQMIASENFVSRAVLQAQGSVLTNKYAEGYPGSRYYCGCSEVDVAETLAVERLCKLFGCKYANVQPHSGSQANQQVYMALLKPGDTVLGMSLDSGGHLTHGAGPNVSGKWFNAVPYNVRRDTNLLDMGEIEEIALRVKPNLIIAGASSYPRRIDFKAFRAIADKVGAYFLADIAHYSGLIAGGQYPTPFGYAHVVTSTTHKTLRGPRGGVIMTDDEEIHKKLRSAVFPGMQGGALMHVIAAKAVAFREAMSPDFKVYVSQILDNSRALAAVLATGGLDVVTGGTDSHMVVVDLRSKGLTGRDVSSSLERAGIVCNKNAVPFDTEKPWVTSGIRLGAAAETSRGLVVKDFEKIGQLVLKIVDSMRAGADMSVVESGVREEVATLVRVVPYDTLAC.

(6S)-5,6,7,8-tetrahydrofolate contacts are provided by residues L123 and 127–129 (GHL). Position 232 is an N6-(pyridoxal phosphate)lysine (K232). E248 contacts (6S)-5,6,7,8-tetrahydrofolate.

Belongs to the SHMT family. In terms of assembly, homodimer. The cofactor is pyridoxal 5'-phosphate.

Its subcellular location is the cytoplasm. The catalysed reaction is (6R)-5,10-methylene-5,6,7,8-tetrahydrofolate + glycine + H2O = (6S)-5,6,7,8-tetrahydrofolate + L-serine. Its pathway is one-carbon metabolism; tetrahydrofolate interconversion. It functions in the pathway amino-acid biosynthesis; glycine biosynthesis; glycine from L-serine: step 1/1. Its function is as follows. Catalyzes the reversible interconversion of serine and glycine with tetrahydrofolate (THF) serving as the one-carbon carrier. This reaction serves as the major source of one-carbon groups required for the biosynthesis of purines, thymidylate, methionine, and other important biomolecules. Also exhibits THF-independent aldolase activity toward beta-hydroxyamino acids, producing glycine and aldehydes, via a retro-aldol mechanism. This chain is Serine hydroxymethyltransferase, found in Anaplasma phagocytophilum (strain HZ).